The sequence spans 548 residues: Membrane protein insertase YidC (548 aa).

Helical transmembrane passes span 6-26 (NLILIGLLFVSFLLWQQWESD), 357-377 (NWGVAIIMLTLLVRGIMFPLT), 424-444 (LGGCLPILVQMPIFIALYWAL), 455-475 (FALWITDLSVKDPFFVLPILM), and 503-523 (PIIFTFMFLWFPAGLTLYWLV).

Belongs to the OXA1/ALB3/YidC family. Type 1 subfamily. Interacts with the Sec translocase complex via SecD. Specifically interacts with transmembrane segments of nascent integral membrane proteins during membrane integration.

The protein resides in the cell inner membrane. Its function is as follows. Required for the insertion and/or proper folding and/or complex formation of integral membrane proteins into the membrane. Involved in integration of membrane proteins that insert both dependently and independently of the Sec translocase complex, as well as at least some lipoproteins. Aids folding of multispanning membrane proteins. This is Membrane protein insertase YidC from Aeromonas hydrophila subsp. hydrophila (strain ATCC 7966 / DSM 30187 / BCRC 13018 / CCUG 14551 / JCM 1027 / KCTC 2358 / NCIMB 9240 / NCTC 8049).